The sequence spans 196 residues: Pyridoxal 5'-phosphate synthase subunit PdxT (196 aa).

Residue 46–48 (GES) coordinates L-glutamine. The active-site Nucleophile is the Cys-78. L-glutamine is bound by residues Arg-105 and 133–134 (IR). Active-site charge relay system residues include His-169 and Glu-171.

This sequence belongs to the glutaminase PdxT/SNO family. In the presence of PdxS, forms a dodecamer of heterodimers. Only shows activity in the heterodimer.

The catalysed reaction is aldehydo-D-ribose 5-phosphate + D-glyceraldehyde 3-phosphate + L-glutamine = pyridoxal 5'-phosphate + L-glutamate + phosphate + 3 H2O + H(+). It carries out the reaction L-glutamine + H2O = L-glutamate + NH4(+). The protein operates within cofactor biosynthesis; pyridoxal 5'-phosphate biosynthesis. Functionally, catalyzes the hydrolysis of glutamine to glutamate and ammonia as part of the biosynthesis of pyridoxal 5'-phosphate. The resulting ammonia molecule is channeled to the active site of PdxS. This chain is Pyridoxal 5'-phosphate synthase subunit PdxT, found in Geobacillus stearothermophilus (Bacillus stearothermophilus).